Here is a 307-residue protein sequence, read N- to C-terminus: Aspartate carbamoyltransferase catalytic subunit (307 aa).

Carbamoyl phosphate contacts are provided by arginine 59 and threonine 60. Lysine 87 lines the L-aspartate pocket. Carbamoyl phosphate-binding residues include arginine 109, histidine 139, and glutamine 142. The L-aspartate site is built by arginine 172 and arginine 224. Residues alanine 265 and proline 266 each coordinate carbamoyl phosphate.

This sequence belongs to the aspartate/ornithine carbamoyltransferase superfamily. ATCase family. In terms of assembly, heterododecamer (2C3:3R2) of six catalytic PyrB chains organized as two trimers (C3), and six regulatory PyrI chains organized as three dimers (R2).

It carries out the reaction carbamoyl phosphate + L-aspartate = N-carbamoyl-L-aspartate + phosphate + H(+). It participates in pyrimidine metabolism; UMP biosynthesis via de novo pathway; (S)-dihydroorotate from bicarbonate: step 2/3. Its function is as follows. Catalyzes the condensation of carbamoyl phosphate and aspartate to form carbamoyl aspartate and inorganic phosphate, the committed step in the de novo pyrimidine nucleotide biosynthesis pathway. This is Aspartate carbamoyltransferase catalytic subunit from Streptococcus agalactiae serotype Ia (strain ATCC 27591 / A909 / CDC SS700).